A 2504-amino-acid polypeptide reads, in one-letter code: Fatty acid synthase (2504 aa).

At Met1 the chain carries N-acetylmethionine. The Ketosynthase family 3 (KS3) domain maps to 1-406; that stretch reads MEEVVIAGMS…GSNVHVILQP (406 aa). An N6-acetyllysine modification is found at Lys59. The residue at position 63 (Ser63) is a Phosphoserine. Lys70 carries the post-translational modification N6-acetyllysine. Residue Cys161 is the For beta-ketoacyl synthase activity of the active site. Ser207 carries the post-translational modification Phosphoserine. His293 serves as the catalytic For beta-ketoacyl synthase activity. At Lys298 the chain carries N6-acetyllysine. His331 acts as the For beta-ketoacyl synthase activity in catalysis. Positions 429–817 are acyl and malonyl transferases; sequence RTLEAVQDLL…INVNPNALFP (389 aa). Residue Lys528 is modified to N6-acetyllysine. Ser581 acts as the For malonyltransferase activity in catalysis. An acyl-CoA contacts are provided by residues 647-648 and Phe671; that span reads DT. N6-acetyllysine is present on Lys673. At Ser725 the chain carries Phosphoserine. An an acyl-CoA-binding site is contributed by Arg773. N6-acetyllysine is present on Lys790. Positions 844–967 are N-terminal hotdog fold; the sequence is VPVAEDFPNG…VYLWEDPNSK (124 aa). Positions 844–1104 constitute a PKS/mFAS DH domain; that stretch reads VPVAEDFPNG…ISRLQTTATS (261 aa). Residue His878 is the Proton acceptor; for dehydratase activity of the active site. Residues 982–1104 form a C-terminal hotdog fold region; that stretch reads SVSRLTQGEV…ISRLQTTATS (123 aa). N6-acetyllysine is present on Lys993. Asp1032 acts as the Proton donor; for dehydratase activity in catalysis. N6-acetyllysine occurs at positions 1071 and 1276. An S-nitrosocysteine modification is found at Cys1464. Residues Ser1577 and Ser1587 each carry the phosphoserine modification. An enoyl reductase region spans residues 1628-1856; it reads DVPSSWTLEE…VQVREEEPEA (229 aa). 1664–1681 lines the NADP(+) pocket; sequence VLIHSGSGGVGQAAISIA. At Lys1697 the chain carries N6-(pyridoxal phosphate)lysine; alternate. Position 1697 is an N6-acetyllysine; alternate (Lys1697). Lys1764 and Lys1840 each carry N6-acetyllysine. Residues 1857 to 2111 form a beta-ketoacyl reductase region; sequence VLPGAQPTLI…FVLAEKKAVA (255 aa). Position 1879-1894 (1879-1894) interacts with NADP(+); it reads SYIITGGLGGFGLELA. Position 1988 is an N6-acetyllysine (Lys1988). The residue at position 2084 (Cys2084) is an S-nitrosocysteine. Residues 2112 to 2192 form the Carrier domain; it reads HGDGDTQRDL…EMSSKTDSAT (81 aa). An O-(pantetheine 4'-phosphoryl)serine; alternate modification is found at Ser2150. Residue Ser2150 is modified to Phosphoserine; alternate. The segment at 2181-2205 is disordered; sequence LQEMSSKTDSATDTTAPKSRSDTSL. Residues 2185–2198 are compositionally biased toward low complexity; sequence SSKTDSATDTTAPK. Phosphoserine occurs at positions 2190 and 2229. The interval 2201–2504 is thioesterase; sequence SDTSLKQNQL…AEPRVSVREG (304 aa). Ser2301 acts as the For thioesterase activity in catalysis. Position 2384 is an N6-acetyllysine (Lys2384). Residue Lys2442 forms a Glycyl lysine isopeptide (Lys-Gly) (interchain with G-Cter in SUMO2) linkage. The active-site For thioesterase activity is the His2474.

Homodimer which is arranged in a head to tail fashion. Interacts with CEACAM1; this interaction is insulin and phosphorylation-dependent; reduces fatty-acid synthase activity. In terms of processing, S-nitrosylation of Fatty acid synthase at cysteine residues Cys-1464 or Cys-2084 is important for the enzyme dimerization. In adipocytes, S-nitrosylation of Fatty acid synthase occurs under physiological conditions and gradually increases during adipogenesis.

It localises to the cytoplasm. The protein resides in the melanosome. It catalyses the reaction acetyl-CoA + n malonyl-CoA + 2n NADPH + 2n H(+) = a long-chain fatty acid + (n+1) CoA + n CO2 + 2n NADP(+).. The catalysed reaction is holo-[ACP] + acetyl-CoA = acetyl-[ACP] + CoA. It carries out the reaction holo-[ACP] + malonyl-CoA = malonyl-[ACP] + CoA. The enzyme catalyses a fatty acyl-[ACP] + malonyl-[ACP] + H(+) = a 3-oxoacyl-[ACP] + holo-[ACP] + CO2. It catalyses the reaction a (3R)-hydroxyacyl-[ACP] + NADP(+) = a 3-oxoacyl-[ACP] + NADPH + H(+). The catalysed reaction is a (3R)-hydroxyacyl-[ACP] = a (2E)-enoyl-[ACP] + H2O. It carries out the reaction a 2,3-saturated acyl-[ACP] + NADP(+) = a (2E)-enoyl-[ACP] + NADPH + H(+). The enzyme catalyses hexadecanoyl-[ACP] + H2O = hexadecanoate + holo-[ACP] + H(+). It catalyses the reaction acetyl-[ACP] + malonyl-[ACP] + H(+) = 3-oxobutanoyl-[ACP] + holo-[ACP] + CO2. The catalysed reaction is 3-oxobutanoyl-[ACP] + NADPH + H(+) = (3R)-hydroxybutanoyl-[ACP] + NADP(+). It carries out the reaction (3R)-hydroxybutanoyl-[ACP] = (2E)-butenoyl-[ACP] + H2O. The enzyme catalyses (2E)-butenoyl-[ACP] + NADPH + H(+) = butanoyl-[ACP] + NADP(+). It catalyses the reaction butanoyl-[ACP] + malonyl-[ACP] + H(+) = 3-oxohexanoyl-[ACP] + holo-[ACP] + CO2. The catalysed reaction is 3-oxohexanoyl-[ACP] + NADPH + H(+) = (3R)-hydroxyhexanoyl-[ACP] + NADP(+). It carries out the reaction (3R)-hydroxyhexanoyl-[ACP] = (2E)-hexenoyl-[ACP] + H2O. The enzyme catalyses (2E)-hexenoyl-[ACP] + NADPH + H(+) = hexanoyl-[ACP] + NADP(+). It catalyses the reaction hexanoyl-[ACP] + malonyl-[ACP] + H(+) = 3-oxooctanoyl-[ACP] + holo-[ACP] + CO2. The catalysed reaction is 3-oxooctanoyl-[ACP] + NADPH + H(+) = (3R)-hydroxyoctanoyl-[ACP] + NADP(+). It carries out the reaction (3R)-hydroxyoctanoyl-[ACP] = (2E)-octenoyl-[ACP] + H2O. The enzyme catalyses (2E)-octenoyl-[ACP] + NADPH + H(+) = octanoyl-[ACP] + NADP(+). It catalyses the reaction octanoyl-[ACP] + malonyl-[ACP] + H(+) = 3-oxodecanoyl-[ACP] + holo-[ACP] + CO2. The catalysed reaction is 3-oxodecanoyl-[ACP] + NADPH + H(+) = (3R)-hydroxydecanoyl-[ACP] + NADP(+). It carries out the reaction (3R)-hydroxydecanoyl-[ACP] = (2E)-decenoyl-[ACP] + H2O. The enzyme catalyses (2E)-decenoyl-[ACP] + NADPH + H(+) = decanoyl-[ACP] + NADP(+). It catalyses the reaction decanoyl-[ACP] + malonyl-[ACP] + H(+) = 3-oxododecanoyl-[ACP] + holo-[ACP] + CO2. The catalysed reaction is 3-oxododecanoyl-[ACP] + NADPH + H(+) = (3R)-hydroxydodecanoyl-[ACP] + NADP(+). It carries out the reaction (3R)-hydroxydodecanoyl-[ACP] = (2E)-dodecenoyl-[ACP] + H2O. The enzyme catalyses (2E)-dodecenoyl-[ACP] + NADPH + H(+) = dodecanoyl-[ACP] + NADP(+). It catalyses the reaction dodecanoyl-[ACP] + malonyl-[ACP] + H(+) = 3-oxotetradecanoyl-[ACP] + holo-[ACP] + CO2. The catalysed reaction is 3-oxotetradecanoyl-[ACP] + NADPH + H(+) = (3R)-hydroxytetradecanoyl-[ACP] + NADP(+). It carries out the reaction (3R)-hydroxytetradecanoyl-[ACP] = (2E)-tetradecenoyl-[ACP] + H2O. The enzyme catalyses (2E)-tetradecenoyl-[ACP] + NADPH + H(+) = tetradecanoyl-[ACP] + NADP(+). It catalyses the reaction tetradecanoyl-[ACP] + malonyl-[ACP] + H(+) = 3-oxohexadecanoyl-[ACP] + holo-[ACP] + CO2. The catalysed reaction is 3-oxohexadecanoyl-[ACP] + NADPH + H(+) = (3R)-hydroxyhexadecanoyl-[ACP] + NADP(+). It carries out the reaction (3R)-hydroxyhexadecanoyl-[ACP] = (2E)-hexadecenoyl-[ACP] + H2O. The enzyme catalyses (2E)-hexadecenoyl-[ACP] + NADPH + H(+) = hexadecanoyl-[ACP] + NADP(+). It catalyses the reaction hexadecanoyl-[ACP] + malonyl-[ACP] + H(+) = 3-oxooctadecanoyl-[ACP] + holo-[ACP] + CO2. The catalysed reaction is 3-oxooctadecanoyl-[ACP] + NADPH + H(+) = (3R)-hydroxyoctadecanoyl-[ACP] + NADP(+). It carries out the reaction (3R)-hydroxyoctadecanoyl-[ACP] = (2E)-octadecenoyl-[ACP] + H2O. The enzyme catalyses (2E)-octadecenoyl-[ACP] + NADPH + H(+) = octadecanoyl-[ACP] + NADP(+). It catalyses the reaction tetradecanoyl-[ACP] + H2O = tetradecanoate + holo-[ACP] + H(+). It functions in the pathway lipid metabolism; fatty acid biosynthesis. In terms of biological role, fatty acid synthetase is a multifunctional enzyme that catalyzes the de novo biosynthesis of long-chain saturated fatty acids starting from acetyl-CoA and malonyl-CoA in the presence of NADPH. This multifunctional protein contains 7 catalytic activities and a site for the binding of the prosthetic group 4'-phosphopantetheine of the acyl carrier protein ([ACP]) domain. The polypeptide is Fatty acid synthase (Fasn) (Mus musculus (Mouse)).